Consider the following 312-residue polypeptide: 3-methyl-2-oxobutanoate hydroxymethyltransferase (312 aa).

The protein belongs to the PanB family.

The enzyme catalyses 3-methyl-2-oxobutanoate + (6R)-5,10-methylene-5,6,7,8-tetrahydrofolate + H2O = 2-dehydropantoate + (6S)-5,6,7,8-tetrahydrofolate. It functions in the pathway cofactor biosynthesis; (R)-pantothenate biosynthesis; (R)-pantoate from 3-methyl-2-oxobutanoate: step 1/2. In terms of biological role, probable 3-methyl-2-oxobutanoate hydroxymethyltransferase required for pantothenic acid biosynthesis. Acts downstream in the pantothenic acid pathway. The polypeptide is 3-methyl-2-oxobutanoate hydroxymethyltransferase (Saccharomyces cerevisiae (strain ATCC 204508 / S288c) (Baker's yeast)).